The sequence spans 102 residues: 10 kDa heat shock protein, mitochondrial (102 aa).

The residue at position 2 (alanine 2) is an N-acetylalanine. N6-acetyllysine is present on lysine 8. At lysine 28 the chain carries N6-succinyllysine. Lysine 40 bears the N6-acetyllysine; alternate mark. 3 positions are modified to N6-malonyllysine; alternate: lysine 40, lysine 54, and lysine 56. An N6-succinyllysine; alternate mark is found at lysine 40, lysine 54, lysine 56, lysine 66, and lysine 70. An N6-acetyllysine; alternate mark is found at lysine 56, lysine 66, and lysine 70. The residue at position 79 (threonine 79) is a Phosphothreonine. N6-acetyllysine; alternate is present on residues lysine 80 and lysine 86. Residues lysine 80 and lysine 86 each carry the N6-succinyllysine; alternate modification. At lysine 99 the chain carries N6-acetyllysine.

This sequence belongs to the GroES chaperonin family. Homoheptamer arranged in a ring structure. 2 heptameric Hsp10 rings interact with a Hsp60 tetradecamer in the structure of a back-to-back double heptameric ring to form the symmetrical football complex.

Its subcellular location is the mitochondrion matrix. Functionally, co-chaperonin implicated in mitochondrial protein import and macromolecular assembly. Together with Hsp60, facilitates the correct folding of imported proteins. May also prevent misfolding and promote the refolding and proper assembly of unfolded polypeptides generated under stress conditions in the mitochondrial matrix. The functional units of these chaperonins consist of heptameric rings of the large subunit Hsp60, which function as a back-to-back double ring. In a cyclic reaction, Hsp60 ring complexes bind one unfolded substrate protein per ring, followed by the binding of ATP and association with 2 heptameric rings of the co-chaperonin Hsp10. This leads to sequestration of the substrate protein in the inner cavity of Hsp60 where, for a certain period of time, it can fold undisturbed by other cell components. Synchronous hydrolysis of ATP in all Hsp60 subunits results in the dissociation of the chaperonin rings and the release of ADP and the folded substrate protein. The sequence is that of 10 kDa heat shock protein, mitochondrial (Hspe1) from Rattus norvegicus (Rat).